Here is a 414-residue protein sequence, read N- to C-terminus: Putative F-box/kelch-repeat protein At2g29800 (414 aa).

Positions 1-61 (MASISETSDD…EVENVPPIPR (61 aa)) are disordered. Basic and acidic residues predominate over residues 20-35 (KPEEPHKNPQEEKENQ). Residues 40-54 (NEADEEDDHQDEEVE) show a composition bias toward acidic residues. In terms of domain architecture, F-box spans 58 to 105 (PIPRKIPPVLIENTIAPLRRCHYPKLSLLSNAFRQVISSEDLFQVRSL). Kelch repeat units follow at residues 163–211 (KIYV…VIDG), 212–258 (RIYV…IVHV), 263–302 (KIYIMDGDYCFAYDPRRRRWETWGPESAQRSYWHLSSCVV), and 305–349 (LLYA…SKMA).

The protein is Putative F-box/kelch-repeat protein At2g29800 of Arabidopsis thaliana (Mouse-ear cress).